The sequence spans 853 residues: DNA mismatch repair protein MutS (853 aa).

614–621 (GPNMGGKS) is an ATP binding site.

Belongs to the DNA mismatch repair MutS family.

In terms of biological role, this protein is involved in the repair of mismatches in DNA. It is possible that it carries out the mismatch recognition step. This protein has a weak ATPase activity. This is DNA mismatch repair protein MutS from Escherichia fergusonii (strain ATCC 35469 / DSM 13698 / CCUG 18766 / IAM 14443 / JCM 21226 / LMG 7866 / NBRC 102419 / NCTC 12128 / CDC 0568-73).